The primary structure comprises 167 residues: Dimethylamine corrinoid protein 3 (167 aa).

Positions 1 to 44 (MNEVGVRFERGKLFLPHVMMAADAMTAGVNALKDLMPEGSASSK) constitute a B12-binding N-terminal domain. Residues 45–167 (MGVIVNGTVE…AVTKAKELLA (123 aa)) enclose the B12-binding domain. H58 contributes to the methylcob(III)alamin binding site.

It belongs to the methylamine corrinoid protein family.

It functions in the pathway one-carbon metabolism; methanogenesis from dimethylamine. Functionally, acts as a methyl group carrier between MtbB and MtbA. The protein is Dimethylamine corrinoid protein 3 (mtbC3) of Methanosarcina mazei (strain ATCC BAA-159 / DSM 3647 / Goe1 / Go1 / JCM 11833 / OCM 88) (Methanosarcina frisia).